Here is a 686-residue protein sequence, read N- to C-terminus: Soluble guanylate cyclase gcy-34 (686 aa).

Position 105 (His-105) interacts with heme. Coiled-coil stretches lie at residues 306–335 (KKHMNAMTKEEREQEVEAMEEEVESNELTQ) and 398–432 (VEVNLQLEANNEQLETMTHELEVERQKTDSILKDM). Positions 455–583 (TVMFCDLPAF…ETVTLASQME (129 aa)) constitute a Guanylate cyclase domain. Residues Asp-460 and Asp-504 each coordinate Mg(2+).

This sequence belongs to the adenylyl cyclase class-4/guanylyl cyclase family. In terms of assembly, heterodimer; with other soluble guanylate cyclases. Heme is required as a cofactor. As to expression, expressed in a small number of neurons, corresponding to URX, AQR and PQR neurons.

The protein localises to the cytoplasm. The enzyme catalyses GTP = 3',5'-cyclic GMP + diphosphate. With respect to regulation, may be regulated by molecular oxygen. Probably not activated by nitric oxide (NO). Its function is as follows. Synthesizes cyclic GMP (cGMP) from GTP. May be involved in sensitivity to quinine by regulating egl-4 activity through the production of cGMP. The protein is Soluble guanylate cyclase gcy-34 (gcy-34) of Caenorhabditis elegans.